Consider the following 263-residue polypeptide: Hatching enzyme 1.2 (263 aa).

The N-terminal stretch at 1–19 (MDIRASLSILLLLFGLSQA) is a signal peptide. Residues 20-64 (SPLREFEAIFVSEPETVDITTQILETNKGSSEVLFEGDVVLPKNR) constitute a propeptide, activation peptide. Residues 65 to 263 (NALICEDKSC…ILRINKLYGC (199 aa)) form the Peptidase M12A domain. 3 cysteine pairs are disulfide-bonded: Cys69/Cys74, Cys114/Cys263, and Cys135/Cys155. His163 contacts Zn(2+). Residue Glu164 is part of the active site. Zn(2+) contacts are provided by His167 and His173.

It depends on Zn(2+) as a cofactor. Expressed in cells of the hatching gland.

It localises to the secreted. It catalyses the reaction Hydrolysis of the inner layer of fish egg envelope. Also hydrolysis of casein and small molecule substrates such as succinyl-Leu-Leu-Val-Tyr-|-7-(4-methyl)coumarylamide.. Metalloendopeptidase which participates in the breakdown of the egg envelope at the time of hatching. Cleaves the N-terminal regions of the zona pellucia glycoproteins ZP2 and ZP3, where it specifically recognizes the peptide sequences TVQQS-|-DYLIK (major site) and KLMLK-|-APEPF (minor site). The chain is Hatching enzyme 1.2 from Danio rerio (Zebrafish).